Reading from the N-terminus, the 154-residue chain is MNYSAKLTGEGLKIAVVTSRFNHFITDRLTEGAIDTLERHGVVKEDIDIFLVPGAFELPFVASKLAQKKKYDAVITLGCVIRGATTHYDYVCNEAAKGIAKAGEYGTPVIFGVVTTESIEQAIERAGTKAGNKGGEAAISAIEMANLNKMMDEL.

Residues F21, 55–57 (AFE), and 79–81 (CVI) each bind 5-amino-6-(D-ribitylamino)uracil. 84 to 85 (AT) is a (2S)-2-hydroxy-3-oxobutyl phosphate binding site. The Proton donor role is filled by H87. F111 serves as a coordination point for 5-amino-6-(D-ribitylamino)uracil. R125 is a binding site for (2S)-2-hydroxy-3-oxobutyl phosphate.

Belongs to the DMRL synthase family. Forms an icosahedral capsid composed of 60 subunits, arranged as a dodecamer of pentamers.

The catalysed reaction is (2S)-2-hydroxy-3-oxobutyl phosphate + 5-amino-6-(D-ribitylamino)uracil = 6,7-dimethyl-8-(1-D-ribityl)lumazine + phosphate + 2 H2O + H(+). The protein operates within cofactor biosynthesis; riboflavin biosynthesis; riboflavin from 2-hydroxy-3-oxobutyl phosphate and 5-amino-6-(D-ribitylamino)uracil: step 1/2. In terms of biological role, catalyzes the formation of 6,7-dimethyl-8-ribityllumazine by condensation of 5-amino-6-(D-ribitylamino)uracil with 3,4-dihydroxy-2-butanone 4-phosphate. This is the penultimate step in the biosynthesis of riboflavin. This chain is 6,7-dimethyl-8-ribityllumazine synthase, found in Macrococcus caseolyticus (strain JCSC5402) (Macrococcoides caseolyticum).